Here is a 182-residue protein sequence, read N- to C-terminus: uncharacterized protein (182 aa).

An N-acetyltransferase domain is found at 55-182 (VNLHDLEKLC…GVKGMFWYPL (128 aa)).

Belongs to the acetyltransferase family. Ycf52 subfamily.

The protein localises to the plastid. It localises to the chloroplast. This is an uncharacterized protein from Gracilaria tenuistipitata var. liui (Red alga).